The following is a 123-amino-acid chain: Small ribosomal subunit protein uS12cz/uS12cy (123 aa).

Belongs to the universal ribosomal protein uS12 family. As to quaternary structure, part of the 30S ribosomal subunit.

The protein resides in the plastid. It localises to the chloroplast. Its function is as follows. With S4 and S5 plays an important role in translational accuracy. Located at the interface of the 30S and 50S subunits. The protein is Small ribosomal subunit protein uS12cz/uS12cy (rps12-A) of Drimys granadensis.